A 289-amino-acid chain; its full sequence is Polyisoprenoid diphosphate/phosphate phosphohydrolase PLPP6 (289 aa).

Positions M1–P81 are disordered. Over M1–P126 the chain is Cytoplasmic. A phosphoserine mark is found at S23, S30, and S64. Residues L127 to C147 traverse the membrane as a helical segment. The Lumenal portion of the chain corresponds to L148 to E158. The chain crosses the membrane as a helical span at residues V159–G179. A phosphatase sequence motif I region spans residues K178–P186. Over L180–H222 the chain is Cytoplasmic. The tract at residues P205–H208 is phosphatase sequence motif II. H208 serves as the catalytic Proton donors. Residues L223 to S243 form a helical membrane-spanning segment. Residues S243 to D254 form a phosphatase sequence motif III region. At R244–D254 the chain is on the lumenal side. The active-site Nucleophile is the H250. The chain crosses the membrane as a helical span at residues V255–S275. Residues P276–P289 are Cytoplasmic-facing.

The protein belongs to the PA-phosphatase related phosphoesterase family. In terms of processing, phosphorylation by PKC activates the phosphatase activity towards presqualene diphosphate.

It is found in the endoplasmic reticulum membrane. The protein resides in the nucleus envelope. It localises to the nucleus inner membrane. It catalyses the reaction presqualene diphosphate + H2O = presqualene phosphate + phosphate + H(+). The enzyme catalyses presqualene phosphate + H2O = presqualene alcohol + phosphate. The catalysed reaction is (2E,6E)-farnesyl diphosphate + H2O = (2E,6E)-farnesyl phosphate + phosphate + H(+). It carries out the reaction (2E,6E)-farnesyl phosphate + H2O = (2E,6E)-farnesol + phosphate. It catalyses the reaction (2E,6E,10E)-geranylgeranyl diphosphate + H2O = (2E,6E,10E)-geranylgeranyl phosphate + phosphate + H(+). The enzyme catalyses (2E,6E,10E)-geranylgeranyl phosphate + H2O = (2E,6E,10E)-geranylgeraniol + phosphate. The catalysed reaction is (2E)-geranyl diphosphate + H2O = (2E)-geranyl phosphate + phosphate + H(+). It carries out the reaction (2E)-geranyl phosphate + H2O = (2E)-geraniol + phosphate. It catalyses the reaction 1,2-dihexadecanoyl-sn-glycero-3-phosphate + H2O = 1,2-dihexadecanoyl-sn-glycerol + phosphate. Functionally, magnesium-independent polyisoprenoid diphosphatase that catalyzes the sequential dephosphorylation of presqualene, farnesyl, geranyl and geranylgeranyl diphosphates. Functions in the innate immune response through the dephosphorylation of presqualene diphosphate which acts as a potent inhibitor of the signaling pathways contributing to polymorphonuclear neutrophils activation. May regulate the biosynthesis of cholesterol and related sterols by dephosphorylating presqualene and farnesyl diphosphate, two key intermediates in this biosynthetic pathway. May also play a role in protein prenylation by acting on farnesyl diphosphate and its derivative geranylgeranyl diphosphate, two precursors for the addition of isoprenoid anchors to membrane proteins. Has a lower activity towards phosphatidic acid (PA), but through phosphatidic acid dephosphorylation may participate in the biosynthesis of phospholipids and triacylglycerols. May also act on ceramide-1-P, lysophosphatidic acid (LPA) and sphing-4-enine 1-phosphate/sphingosine-1-phosphate. In Bos taurus (Bovine), this protein is Polyisoprenoid diphosphate/phosphate phosphohydrolase PLPP6.